Consider the following 220-residue polypeptide: Fibroblast growth factor 3 (220 aa).

The N-terminal stretch at 1–19 (MLVIWLLLLALLPEPRVPA) is a signal peptide. The tract at residues 19 to 40 (AATASPRAPRDAGGRGGVYEHL) is disordered. N66 carries N-linked (GlcNAc...) asparagine glycosylation.

It belongs to the heparin-binding growth factors family.

The protein localises to the secreted. Its function is as follows. Plays an important role in the regulation of embryonic development, cell proliferation, and cell differentiation. The sequence is that of Fibroblast growth factor 3 (FGF3) from Gallus gallus (Chicken).